The following is a 128-amino-acid chain: Large ribosomal subunit protein bL17 (128 aa).

This sequence belongs to the bacterial ribosomal protein bL17 family. Part of the 50S ribosomal subunit. Contacts protein L32.

The protein is Large ribosomal subunit protein bL17 of Streptococcus suis (strain 98HAH33).